The following is a 365-amino-acid chain: Flagellar P-ring protein (365 aa).

An N-terminal signal peptide occupies residues 1 to 21 (MKSLRLVALFCCLLPLGMAHA).

This sequence belongs to the FlgI family. The basal body constitutes a major portion of the flagellar organelle and consists of four rings (L,P,S, and M) mounted on a central rod.

It is found in the periplasm. It localises to the bacterial flagellum basal body. In terms of biological role, assembles around the rod to form the L-ring and probably protects the motor/basal body from shearing forces during rotation. The chain is Flagellar P-ring protein from Aeromonas hydrophila subsp. hydrophila (strain ATCC 7966 / DSM 30187 / BCRC 13018 / CCUG 14551 / JCM 1027 / KCTC 2358 / NCIMB 9240 / NCTC 8049).